A 258-amino-acid chain; its full sequence is Indole-3-glycerol phosphate synthase (258 aa).

The protein belongs to the TrpC family.

It carries out the reaction 1-(2-carboxyphenylamino)-1-deoxy-D-ribulose 5-phosphate + H(+) = (1S,2R)-1-C-(indol-3-yl)glycerol 3-phosphate + CO2 + H2O. Its pathway is amino-acid biosynthesis; L-tryptophan biosynthesis; L-tryptophan from chorismate: step 4/5. This is Indole-3-glycerol phosphate synthase from Chlorobium phaeobacteroides (strain DSM 266 / SMG 266 / 2430).